The sequence spans 363 residues: Alanine racemase (363 aa).

Catalysis depends on K35, which acts as the Proton acceptor; specific for D-alanine. K35 bears the N6-(pyridoxal phosphate)lysine mark. Residue R134 participates in substrate binding. Y259 acts as the Proton acceptor; specific for L-alanine in catalysis. A substrate-binding site is contributed by M307.

It belongs to the alanine racemase family. The cofactor is pyridoxal 5'-phosphate.

It carries out the reaction L-alanine = D-alanine. It functions in the pathway amino-acid biosynthesis; D-alanine biosynthesis; D-alanine from L-alanine: step 1/1. Catalyzes the interconversion of L-alanine and D-alanine. May also act on other amino acids. The polypeptide is Alanine racemase (alr) (Shewanella denitrificans (strain OS217 / ATCC BAA-1090 / DSM 15013)).